The sequence spans 120 residues: C-C motif chemokine 16 (120 aa).

An N-terminal signal peptide occupies residues 1–23 (MKVSEAALSLLVLILIITSASRS). 2 cysteine pairs are disulfide-bonded: Cys37/Cys60 and Cys38/Cys76.

The protein belongs to the intercrine beta (chemokine CC) family. In terms of tissue distribution, mainly expressed in liver, also found in spleen and thymus. Highly expressed in LPS- and IFN-gamma-activated monocytes, weakly in some lymphocytes, including natural killer cells, gamma-delta T-cells, and some T-cell clones.

Its subcellular location is the secreted. Functionally, shows chemotactic activity for lymphocytes and monocytes but not neutrophils. Also shows potent myelosuppressive activity, suppresses proliferation of myeloid progenitor cells. Recombinant SCYA16 shows chemotactic activity for monocytes and THP-1 monocytes, but not for resting lymphocytes and neutrophils. Induces a calcium flux in THP-1 cells that were desensitized by prior expression to RANTES. The polypeptide is C-C motif chemokine 16 (CCL16) (Homo sapiens (Human)).